Consider the following 512-residue polypeptide: Norfluorocurarine oxidase (512 aa).

A helical transmembrane segment spans residues 3–23 (LLLNPSLFSLLPLLLFIIFLF). C453 is a heme binding site.

This sequence belongs to the cytochrome P450 family. It depends on heme as a cofactor.

It localises to the membrane. The catalysed reaction is norfluorocurarine + reduced [NADPH--hemoprotein reductase] + O2 = 18-hydroxynorfluorocurarine + oxidized [NADPH--hemoprotein reductase] + H2O + H(+). It participates in alkaloid biosynthesis. Monooxygenase involved in the biosynthesis of curare monoterpene indole alkaloids (MIAs), natural products such as diaboline, a pharmacologically active compound used to regulate blood pressure. Curare alkaloids act as animal glycine receptor antagonists. Catalyzes the conversion of norfluorocurarine to 18-OH norfluorocurarine. This is Norfluorocurarine oxidase from Strychnos sp.